Here is a 159-residue protein sequence, read N- to C-terminus: Endoribonuclease YbeY (159 aa).

Residues histidine 122, histidine 126, and histidine 132 each coordinate Zn(2+).

Belongs to the endoribonuclease YbeY family. The cofactor is Zn(2+).

It is found in the cytoplasm. Its function is as follows. Single strand-specific metallo-endoribonuclease involved in late-stage 70S ribosome quality control and in maturation of the 3' terminus of the 16S rRNA. This chain is Endoribonuclease YbeY, found in Roseiflexus castenholzii (strain DSM 13941 / HLO8).